The following is a 215-amino-acid chain: tRNA (guanine-N(7)-)-methyltransferase (215 aa).

4 residues coordinate S-adenosyl-L-methionine: glutamate 44, glutamate 69, aspartate 96, and aspartate 118. Aspartate 118 is an active-site residue. Residue lysine 122 coordinates substrate. The interval arginine 124 to arginine 129 is interaction with RNA. Substrate-binding positions include aspartate 154 and threonine 192 to glutamate 195.

Belongs to the class I-like SAM-binding methyltransferase superfamily. TrmB family.

It carries out the reaction guanosine(46) in tRNA + S-adenosyl-L-methionine = N(7)-methylguanosine(46) in tRNA + S-adenosyl-L-homocysteine. It functions in the pathway tRNA modification; N(7)-methylguanine-tRNA biosynthesis. Its function is as follows. Catalyzes the formation of N(7)-methylguanine at position 46 (m7G46) in tRNA. The polypeptide is tRNA (guanine-N(7)-)-methyltransferase (Limosilactobacillus fermentum (strain NBRC 3956 / LMG 18251) (Lactobacillus fermentum)).